The following is a 276-amino-acid chain: Thiazole synthase (276 aa).

Lysine 117 functions as the Schiff-base intermediate with DXP in the catalytic mechanism. Residues glycine 178, 204–205, and 226–227 contribute to the 1-deoxy-D-xylulose 5-phosphate site; these read AG and NT.

Belongs to the ThiG family. Homotetramer. Forms heterodimers with either ThiH or ThiS.

It localises to the plastid. Its subcellular location is the chloroplast. It carries out the reaction [ThiS sulfur-carrier protein]-C-terminal-Gly-aminoethanethioate + 2-iminoacetate + 1-deoxy-D-xylulose 5-phosphate = [ThiS sulfur-carrier protein]-C-terminal Gly-Gly + 2-[(2R,5Z)-2-carboxy-4-methylthiazol-5(2H)-ylidene]ethyl phosphate + 2 H2O + H(+). It participates in cofactor biosynthesis; thiamine diphosphate biosynthesis. In terms of biological role, catalyzes the rearrangement of 1-deoxy-D-xylulose 5-phosphate (DXP) to produce the thiazole phosphate moiety of thiamine. Sulfur is provided by the thiocarboxylate moiety of the carrier protein ThiS. In vitro, sulfur can be provided by H(2)S. This chain is Thiazole synthase, found in Gracilaria tenuistipitata var. liui (Red alga).